Reading from the N-terminus, the 718-residue chain is LON peptidase N-terminal domain and RING finger protein 3 (718 aa).

Residues 1 to 69 (MESLRTEQML…PGTSTPESKV (69 aa)) are disordered. Positions 57–66 (EQSPGTSTPE) are enriched in polar residues. A TPR 1 repeat occupies 67–100 (SKVLLTQADALASRGRIREALEVYRQLSERQQLV). Residues 158-196 (CRKCHGFLSDPVSLSCGHTFCKLCLERGRAADRRCALCG) form an RING-type 1 zinc finger. 2 TPR repeats span residues 243-276 (ASQL…APND) and 278-310 (LLYS…RPMG). The interval 322–413 (SQEEAAARGD…TDQGDKPALS (92 aa)) is disordered. The span at 339-352 (AKVKGDGQQHHMKD) shows a compositional bias: basic and acidic residues. An RING-type 2 zinc finger spans residues 426-464 (CALCMRLFYEPVTTPCGHTFCLKCLERCLDHNAKCPLCK). The 210-residue stretch at 505–714 (MEELSNLNKN…GIRRVLAFIS (210 aa)) folds into the Lon N-terminal domain.

The chain is LON peptidase N-terminal domain and RING finger protein 3 (LONRF3) from Macaca fascicularis (Crab-eating macaque).